We begin with the raw amino-acid sequence, 120 residues long: Large ribosomal subunit protein eL18 (120 aa).

It belongs to the eukaryotic ribosomal protein eL18 family.

The sequence is that of Large ribosomal subunit protein eL18 from Pyrococcus abyssi (strain GE5 / Orsay).